A 37-amino-acid polypeptide reads, in one-letter code: Large ribosomal subunit protein bL12 (37 aa).

It belongs to the bacterial ribosomal protein bL12 family. In terms of assembly, homodimer. Part of the ribosomal stalk of the 50S ribosomal subunit. Forms a multimeric L10(L12)X complex, where L10 forms an elongated spine to which 2 to 4 L12 dimers bind in a sequential fashion. Binds GTP-bound translation factors.

Its function is as follows. Forms part of the ribosomal stalk which helps the ribosome interact with GTP-bound translation factors. Is thus essential for accurate translation. In Clostridium pasteurianum, this protein is Large ribosomal subunit protein bL12 (rplL).